A 201-amino-acid polypeptide reads, in one-letter code: Holliday junction branch migration complex subunit RuvA (201 aa).

The domain I stretch occupies residues 1 to 63 (MIEFVRGYVD…EDTLALYGFR (63 aa)). The interval 64–142 (TREERTLFAK…AVTAKTFPDL (79 aa)) is domain II. The tract at residues 143–153 (FHLQEESARPH) is flexible linker. A domain III region spans residues 153-201 (HLSALEEAIEALKALGYAEREIQKVVPSLMKENLSTDQYVKRALQQLLK).

The protein belongs to the RuvA family. As to quaternary structure, homotetramer. Forms an RuvA(8)-RuvB(12)-Holliday junction (HJ) complex. HJ DNA is sandwiched between 2 RuvA tetramers; dsDNA enters through RuvA and exits via RuvB. An RuvB hexamer assembles on each DNA strand where it exits the tetramer. Each RuvB hexamer is contacted by two RuvA subunits (via domain III) on 2 adjacent RuvB subunits; this complex drives branch migration. In the full resolvosome a probable DNA-RuvA(4)-RuvB(12)-RuvC(2) complex forms which resolves the HJ.

The protein resides in the cytoplasm. In terms of biological role, the RuvA-RuvB-RuvC complex processes Holliday junction (HJ) DNA during genetic recombination and DNA repair, while the RuvA-RuvB complex plays an important role in the rescue of blocked DNA replication forks via replication fork reversal (RFR). RuvA specifically binds to HJ cruciform DNA, conferring on it an open structure. The RuvB hexamer acts as an ATP-dependent pump, pulling dsDNA into and through the RuvAB complex. HJ branch migration allows RuvC to scan DNA until it finds its consensus sequence, where it cleaves and resolves the cruciform DNA. The protein is Holliday junction branch migration complex subunit RuvA of Geobacillus sp. (strain WCH70).